Consider the following 1224-residue polypeptide: DNA-directed RNA polymerase subunit beta'' (1224 aa).

Zn(2+) is bound by residues C233, C308, C315, and C318.

Belongs to the RNA polymerase beta' chain family. RpoC2 subfamily. In terms of assembly, in plastids the minimal PEP RNA polymerase catalytic core is composed of four subunits: alpha, beta, beta', and beta''. When a (nuclear-encoded) sigma factor is associated with the core the holoenzyme is formed, which can initiate transcription. It depends on Zn(2+) as a cofactor.

The protein localises to the plastid. The protein resides in the chloroplast. It catalyses the reaction RNA(n) + a ribonucleoside 5'-triphosphate = RNA(n+1) + diphosphate. Its function is as follows. DNA-dependent RNA polymerase catalyzes the transcription of DNA into RNA using the four ribonucleoside triphosphates as substrates. This Pinus thunbergii (Japanese black pine) protein is DNA-directed RNA polymerase subunit beta''.